Here is a 178-residue protein sequence, read N- to C-terminus: CD209 antigen-like protein C (178 aa).

C48 and C59 are oxidised to a cystine. The C-type lectin domain occupies 54–169 (VFQGNCYFFS…CTIKKYWICK (116 aa)). N70 is a glycosylation site (N-linked (GlcNAc...) asparagine). Cystine bridges form between C76/C168 and C147/C160. Positions 138, 140, 145, 156, and 157 each coordinate Ca(2+).

In terms of biological role, probable pathogen-recognition receptor. May recognize in a calcium-dependent manner high mannose N-linked oligosaccharides in a variety of pathogen antigens. In Mus musculus (Mouse), this protein is CD209 antigen-like protein C (Cd209c).